A 106-amino-acid polypeptide reads, in one-letter code: uncharacterized protein (106 aa).

This sequence to the N-terminal of E.carotovora exoenzyme regulation regulon ORF1. The C-terminal part is colinear with YqcB. The protein to E.coli YqcC.

This is an uncharacterized protein from Haemophilus influenzae (strain ATCC 51907 / DSM 11121 / KW20 / Rd).